The sequence spans 142 residues: Large ribosomal subunit protein uL11 (142 aa).

Belongs to the universal ribosomal protein uL11 family. Part of the ribosomal stalk of the 50S ribosomal subunit. Interacts with L10 and the large rRNA to form the base of the stalk. L10 forms an elongated spine to which L12 dimers bind in a sequential fashion forming a multimeric L10(L12)X complex. Post-translationally, one or more lysine residues are methylated.

Its function is as follows. Forms part of the ribosomal stalk which helps the ribosome interact with GTP-bound translation factors. This Vibrio vulnificus (strain YJ016) protein is Large ribosomal subunit protein uL11.